A 143-amino-acid polypeptide reads, in one-letter code: uncharacterized protein (143 aa).

This is an uncharacterized protein from Homo sapiens (Human).